Consider the following 215-residue polypeptide: Large ribosomal subunit protein uL3 (215 aa).

A disordered region spans residues 124–164 (KRHGFSRGPMTHGSKNHREPGSTGAGTTPGRIYPGKRMAGR).

The protein belongs to the universal ribosomal protein uL3 family. Part of the 50S ribosomal subunit. Forms a cluster with proteins L14 and L19.

Functionally, one of the primary rRNA binding proteins, it binds directly near the 3'-end of the 23S rRNA, where it nucleates assembly of the 50S subunit. This chain is Large ribosomal subunit protein uL3, found in Synechococcus sp. (strain RCC307).